The sequence spans 443 residues: UDP-N-acetylmuramate--L-alanine ligase (443 aa).

Position 111–117 (111–117 (GAHGKTS)) interacts with ATP.

It belongs to the MurCDEF family.

It is found in the cytoplasm. It carries out the reaction UDP-N-acetyl-alpha-D-muramate + L-alanine + ATP = UDP-N-acetyl-alpha-D-muramoyl-L-alanine + ADP + phosphate + H(+). The protein operates within cell wall biogenesis; peptidoglycan biosynthesis. In terms of biological role, cell wall formation. This chain is UDP-N-acetylmuramate--L-alanine ligase, found in Ligilactobacillus salivarius (strain UCC118) (Lactobacillus salivarius).